The sequence spans 40 residues: Spodomicin (40 aa).

3 cysteine pairs are disulfide-bonded: Cys-6–Cys-20, Cys-10–Cys-32, and Cys-21–Cys-39.

In terms of assembly, monomer. In terms of processing, contains three disulfide bonds. In terms of tissue distribution, hemolymph.

The protein resides in the secreted. Functionally, fungicide. This is Spodomicin from Spodoptera littoralis (Egyptian cotton leafworm).